The primary structure comprises 180 residues: Acireductone dioxygenase 1 (180 aa).

Fe(2+) contacts are provided by His-82, His-84, Glu-88, and His-127. The Ni(2+) site is built by His-82, His-84, Glu-88, and His-127.

The protein belongs to the acireductone dioxygenase (ARD) family. Fe(2+) is required as a cofactor. Requires Ni(2+) as cofactor.

It localises to the cytoplasm. The protein localises to the nucleus. The catalysed reaction is 1,2-dihydroxy-5-(methylsulfanyl)pent-1-en-3-one + O2 = 4-methylsulfanyl-2-oxobutanoate + formate + 2 H(+). It catalyses the reaction 1,2-dihydroxy-5-(methylsulfanyl)pent-1-en-3-one + O2 = 3-(methylsulfanyl)propanoate + CO + formate + 2 H(+). Its pathway is amino-acid biosynthesis; L-methionine biosynthesis via salvage pathway; L-methionine from S-methyl-5-thio-alpha-D-ribose 1-phosphate: step 5/6. In terms of biological role, catalyzes 2 different reactions between oxygen and the acireductone 1,2-dihydroxy-3-keto-5-methylthiopentene (DHK-MTPene) depending upon the metal bound in the active site. Fe-containing acireductone dioxygenase (Fe-ARD) produces formate and 2-keto-4-methylthiobutyrate (KMTB), the alpha-ketoacid precursor of methionine in the methionine recycle pathway. Ni-containing acireductone dioxygenase (Ni-ARD) produces methylthiopropionate, carbon monoxide and formate, and does not lie on the methionine recycle pathway. The chain is Acireductone dioxygenase 1 from Sorghum bicolor (Sorghum).